Here is a 371-residue protein sequence, read N- to C-terminus: tRNA 2-selenouridine synthase (371 aa).

Residues 14–137 (FLDDVPLIDL…MRRFLIDTLD (124 aa)) enclose the Rhodanese domain. The S-selanylcysteine intermediate role is filled by Cys-97.

This sequence belongs to the SelU family. As to quaternary structure, monomer.

It catalyses the reaction 5-methylaminomethyl-2-thiouridine(34) in tRNA + selenophosphate + (2E)-geranyl diphosphate + H2O + H(+) = 5-methylaminomethyl-2-selenouridine(34) in tRNA + (2E)-thiogeraniol + phosphate + diphosphate. It carries out the reaction 5-methylaminomethyl-2-thiouridine(34) in tRNA + (2E)-geranyl diphosphate = 5-methylaminomethyl-S-(2E)-geranyl-thiouridine(34) in tRNA + diphosphate. The catalysed reaction is 5-methylaminomethyl-S-(2E)-geranyl-thiouridine(34) in tRNA + selenophosphate + H(+) = 5-methylaminomethyl-2-(Se-phospho)selenouridine(34) in tRNA + (2E)-thiogeraniol. The enzyme catalyses 5-methylaminomethyl-2-(Se-phospho)selenouridine(34) in tRNA + H2O = 5-methylaminomethyl-2-selenouridine(34) in tRNA + phosphate. Its function is as follows. Involved in the post-transcriptional modification of the uridine at the wobble position (U34) of tRNA(Lys), tRNA(Glu) and tRNA(Gln). Catalyzes the conversion of 2-thiouridine (S2U-RNA) to 2-selenouridine (Se2U-RNA). Acts in a two-step process involving geranylation of 2-thiouridine (S2U) to S-geranyl-2-thiouridine (geS2U) and subsequent selenation of the latter derivative to 2-selenouridine (Se2U) in the tRNA chain. This is tRNA 2-selenouridine synthase from Aeromonas salmonicida (strain A449).